A 42-amino-acid chain; its full sequence is MQVEETLLKKKQTINANNILSFNRVAVAPYSYIALTPYGQKI.

The protein localises to the plastid. Its subcellular location is the chloroplast. This is an uncharacterized protein from Diacronema lutheri (Unicellular marine alga).